Here is a 227-residue protein sequence, read N- to C-terminus: Protein FdhD (227 aa).

210 to 215 (FARNGK) provides a ligand contact to Mo-bis(molybdopterin guanine dinucleotide).

The protein belongs to the FdhD family.

Its subcellular location is the cytoplasm. Its function is as follows. Required for formate dehydrogenase (FDH) activity. The polypeptide is Protein FdhD (Methanocaldococcus jannaschii (strain ATCC 43067 / DSM 2661 / JAL-1 / JCM 10045 / NBRC 100440) (Methanococcus jannaschii)).